The sequence spans 140 residues: 3-hydroxyacyl-[acyl-carrier-protein] dehydratase FabZ (140 aa).

Residue histidine 47 is part of the active site.

The protein belongs to the thioester dehydratase family. FabZ subfamily.

The protein localises to the cytoplasm. The enzyme catalyses a (3R)-hydroxyacyl-[ACP] = a (2E)-enoyl-[ACP] + H2O. In terms of biological role, involved in unsaturated fatty acids biosynthesis. Catalyzes the dehydration of short chain beta-hydroxyacyl-ACPs and long chain saturated and unsaturated beta-hydroxyacyl-ACPs. The polypeptide is 3-hydroxyacyl-[acyl-carrier-protein] dehydratase FabZ (Streptococcus pyogenes serotype M49 (strain NZ131)).